A 242-amino-acid chain; its full sequence is UPF0246 protein SPCG_1533 (242 aa).

The protein belongs to the UPF0246 family.

The sequence is that of UPF0246 protein SPCG_1533 from Streptococcus pneumoniae (strain CGSP14).